Reading from the N-terminus, the 114-residue chain is T cell receptor beta variable 4-1 (114 aa).

Positions 1-21 (MGCRLLCCAVLCLLGAVPIDT) are cleaved as a signal peptide. Residues 22 to 114 (EVTQTPKHLV…SALYLCASSQ (93 aa)) enclose the Ig-like domain. Residues Cys-42 and Cys-110 are joined by a disulfide bond. Residues Asn-76 and Asn-89 are each glycosylated (N-linked (GlcNAc...) asparagine).

In terms of assembly, alpha-beta TR is a heterodimer composed of an alpha and beta chain; disulfide-linked. The alpha-beta TR is associated with the transmembrane signaling CD3 coreceptor proteins to form the TR-CD3 (TcR or TCR). The assembly of alpha-beta TR heterodimers with CD3 occurs in the endoplasmic reticulum where a single alpha-beta TR heterodimer associates with one CD3D-CD3E heterodimer, one CD3G-CD3E heterodimer and one CD247 homodimer forming a stable octameric structure. CD3D-CD3E and CD3G-CD3E heterodimers preferentially associate with TR alpha and TR beta chains, respectively. The association of the CD247 homodimer is the last step of TcR assembly in the endoplasmic reticulum and is required for transport to the cell surface.

The protein resides in the cell membrane. In terms of biological role, v region of the variable domain of T cell receptor (TR) beta chain that participates in the antigen recognition. Alpha-beta T cell receptors are antigen specific receptors which are essential to the immune response and are present on the cell surface of T lymphocytes. Recognize peptide-major histocompatibility (MH) (pMH) complexes that are displayed by antigen presenting cells (APC), a prerequisite for efficient T cell adaptive immunity against pathogens. Binding of alpha-beta TR to pMH complex initiates TR-CD3 clustering on the cell surface and intracellular activation of LCK that phosphorylates the ITAM motifs of CD3G, CD3D, CD3E and CD247 enabling the recruitment of ZAP70. In turn ZAP70 phosphorylates LAT, which recruits numerous signaling molecules to form the LAT signalosome. The LAT signalosome propagates signal branching to three major signaling pathways, the calcium, the mitogen-activated protein kinase (MAPK) kinase and the nuclear factor NF-kappa-B (NF-kB) pathways, leading to the mobilization of transcription factors that are critical for gene expression and essential for T cell growth and differentiation. The T cell repertoire is generated in the thymus, by V-(D)-J rearrangement. This repertoire is then shaped by intrathymic selection events to generate a peripheral T cell pool of self-MH restricted, non-autoaggressive T cells. Post-thymic interaction of alpha-beta TR with the pMH complexes shapes TR structural and functional avidity. In Homo sapiens (Human), this protein is T cell receptor beta variable 4-1.